The sequence spans 97 residues: MSQDELDQIRAKIQDHLISSGNYELINKQLKLKLYENGWYDKVGQLATTELQQEDNKNLTFERLYAMVKPQAESMVPDEVRQEIMTRIREYLEDVIQ.

The protein belongs to the ENY2 family. In terms of assembly, component of the nuclear pore complex (NPC)-associated TREX-2 complex (transcription and export complex 2), composed of at least SUS1, SAC3, THP1, SEM1, and CDC31. TREX-2 contains 2 SUS1 chains. The TREX-2 complex interacts with the nucleoporin NUP1. Component of the 1.8 MDa SAGA transcription coactivator-HAT complex. SAGA is built of 5 distinct domains with specialized functions. Within the SAGA complex, SUS1, SGF11, SGF73 and UBP8 form an additional subcomplex of SAGA called the DUB module (deubiquitination module). Interacts directly with THP1, SAC3, SGF11, and with the RNA polymerase II.

It is found in the nucleus. It localises to the nucleoplasm. The protein localises to the cytoplasm. The protein resides in the P-body. Its function is as follows. Involved in mRNA export coupled transcription activation by association with both the TREX-2 and the SAGA complexes. At the promoters, SAGA is required for recruitment of the basal transcription machinery. It influences RNA polymerase II transcriptional activity through different activities such as TBP interaction and promoter selectivity, interaction with transcription activators, and chromatin modification through histone acetylation and deubiquitination. Within the SAGA complex, participates in a subcomplex required for deubiquitination of H2B and for the maintenance of steady-state H3 methylation levels. The TREX-2 complex functions in docking export-competent ribonucleoprotein particles (mRNPs) to the nuclear entrance of the nuclear pore complex (nuclear basket). TREX-2 participates in mRNA export and accurate chromatin positioning in the nucleus by tethering genes to the nuclear periphery. May also be involved in cytoplasmic mRNA decay by interaction with components of P-bodies. The protein is Transcription and mRNA export factor SUS1 of Meyerozyma guilliermondii (strain ATCC 6260 / CBS 566 / DSM 6381 / JCM 1539 / NBRC 10279 / NRRL Y-324) (Yeast).